The chain runs to 285 residues: Hypersensitive-induced reaction 1 protein (285 aa).

Glycine 2 carries N-myristoyl glycine lipidation. Positions 118–190 (FEQKNEIAKS…EKILQIKRAE (73 aa)) form a coiled coil.

Homo- and heterodimer. Interacts with LRR1 (via LRR domain). As to expression, constitutively expressed in stems, roots and flowers, but not in leaves and fruits.

In terms of biological role, positive regulator of hypersensitive response (HR)-like cell death. May be involved in potassium ion channel regulation. In Capsicum annuum (Capsicum pepper), this protein is Hypersensitive-induced reaction 1 protein.